We begin with the raw amino-acid sequence, 337 residues long: UDP-3-O-acylglucosamine N-acyltransferase (337 aa).

His-238 acts as the Proton acceptor in catalysis.

Belongs to the transferase hexapeptide repeat family. LpxD subfamily. Homotrimer.

The enzyme catalyses a UDP-3-O-[(3R)-3-hydroxyacyl]-alpha-D-glucosamine + a (3R)-hydroxyacyl-[ACP] = a UDP-2-N,3-O-bis[(3R)-3-hydroxyacyl]-alpha-D-glucosamine + holo-[ACP] + H(+). The protein operates within bacterial outer membrane biogenesis; LPS lipid A biosynthesis. Catalyzes the N-acylation of UDP-3-O-acylglucosamine using 3-hydroxyacyl-ACP as the acyl donor. Is involved in the biosynthesis of lipid A, a phosphorylated glycolipid that anchors the lipopolysaccharide to the outer membrane of the cell. The chain is UDP-3-O-acylglucosamine N-acyltransferase from Xanthomonas oryzae pv. oryzae (strain KACC10331 / KXO85).